The sequence spans 274 residues: Penicillin-insensitive murein endopeptidase (274 aa).

Residues Met1–Ala19 form the signal peptide. Cystine bridges form between Cys44–Cys265, Cys187–Cys235, and Cys216–Cys223. The Zn(2+) site is built by His110, His113, Asp120, Asp147, His150, and His211.

Belongs to the peptidase M74 family. In terms of assembly, dimer. Requires Zn(2+) as cofactor.

The protein localises to the periplasm. Murein endopeptidase that cleaves the D-alanyl-meso-2,6-diamino-pimelyl amide bond that connects peptidoglycan strands. Likely plays a role in the removal of murein from the sacculus. In Shigella sonnei (strain Ss046), this protein is Penicillin-insensitive murein endopeptidase.